Here is a 488-residue protein sequence, read N- to C-terminus: MVRLPYTTALTTLFSYGLLFAFGQLRDFFRKLIDWFKAKNVKGYAPICLGLEDFYVRRLYLRIQDCFGRPIASAPDAWFDVVERYSNDSNKTLKRTSNTTRCLNLGSYNYLGFAAADEYCTPLVIESLKKYSPSTCSVRVDGGTTKLHTELEELVARFVGKPAAILFGMGYVTNSAIIPCLVGKGGLIISDSLNHNSIVNGARGSGATVRVFQHNSPAHLEEVLREQIAGGQPRTHRPWKKIIVIVEGIYSMEGELCKLPEIIAVCKKYKAYTYLDEAHSIGAVGQSGRGVCELLGVDPADVDIMMGTFTKSFGSCGGYIAASKEIIQHLKLSCPAHIYATSMSPPAVQQVISAIKVILGEDGSNRGAQKLARIRENSNFFRSELKKMGFEVLGDNDSPVMPIMLYNPAKIPAFSRECLRQKVAVVTVAFPATPLLLARARICISASHTREDLIKALDVISRVGDLVGIKYFPAEPPKIAEADHDKLE.

A helical membrane pass occupies residues 4–24; the sequence is LPYTTALTTLFSYGLLFAFGQ. At lysine 311 the chain carries N6-(pyridoxal phosphate)lysine.

Belongs to the class-II pyridoxal-phosphate-dependent aminotransferase family. In terms of assembly, heterodimer with LCB1. Component of the serine palmitoyltransferase (SPT) complex, composed of LCB1 and LCB2. Requires pyridoxal 5'-phosphate as cofactor.

Its subcellular location is the endoplasmic reticulum membrane. The catalysed reaction is L-serine + hexadecanoyl-CoA + H(+) = 3-oxosphinganine + CO2 + CoA. Its pathway is lipid metabolism; sphingolipid metabolism. Its function is as follows. Serine palmitoyltransferase (SPT). The heterodimer formed with LCB1 constitutes the catalytic core. In Oryza sativa subsp. japonica (Rice), this protein is Long chain base biosynthesis protein 2a.